We begin with the raw amino-acid sequence, 176 residues long: Viral interleukin-10 homolog (176 aa).

The first 25 residues, 1–25, serve as a signal peptide directing secretion; sequence MLSVMVSSSLVLIVFFLGASEEAKP. 2 disulfides stabilise this stretch: C38–C128 and C82–C133. Residue N152 is glycosylated (N-linked (GlcNAc...) asparagine; by host).

The protein belongs to the IL-10 family. As to quaternary structure, homodimer; disulfide-linked.

Its subcellular location is the secreted. Functional viral IL-10 homolog. Can bind to the human IL-10 receptor and compete with human IL-10 for binding sites. Requires both subunits of the human IL-10 receptor complex to induce signal transduction events and biological activities. IL-10 signaling pathway has several immunosuppressive activities that are exploited by the virus. Inhibits TLR-induced type I interferon production in host plasmacytoid dendritic cells. This Homo sapiens (Human) protein is Viral interleukin-10 homolog (UL111A).